The sequence spans 86 residues: uncharacterized protein (86 aa).

The N-terminal stretch at 1–22 is a signal peptide; that stretch reads MKTINTVVAAMALSTLSFGVFA.

This sequence belongs to the BhsA/McbA family.

Its subcellular location is the periplasm. This is an uncharacterized protein from Escherichia coli O6:H1 (strain CFT073 / ATCC 700928 / UPEC).